Here is a 126-residue protein sequence, read N- to C-terminus: Muscarinic acetylcholine receptor M4 (126 aa).

Positions 1–90 (MKQSVKKPPP…LQPRTLNPAS (90 aa)) are disordered. Residues 1-126 (MKQSVKKPPP…PAGMRPAANV (126 aa)) are Cytoplasmic-facing. A compositionally biased stretch (pro residues) spans 28-39 (APPPVLPPPPRP). Polar residues predominate over residues 47 to 57 (NESSSGSATQN). The span at 64–75 (TELSTTEATTPA) shows a compositional bias: low complexity.

The protein belongs to the G-protein coupled receptor 1 family. Muscarinic acetylcholine receptor subfamily. CHRM4 sub-subfamily.

Its subcellular location is the cell membrane. It is found in the postsynaptic cell membrane. The muscarinic acetylcholine receptor mediates various cellular responses, including inhibition of adenylate cyclase, breakdown of phosphoinositides and modulation of potassium channels through the action of G proteins. Primary transducing effect is inhibition of adenylate cyclase. May couple to multiple functional responses in cell lines. The polypeptide is Muscarinic acetylcholine receptor M4 (CHRM4) (Bos taurus (Bovine)).